A 375-amino-acid chain; its full sequence is Queuine tRNA-ribosyltransferase (375 aa).

Catalysis depends on Asp89, which acts as the Proton acceptor. Residues 89–93, Asp143, Gln187, and Gly214 each bind substrate; that span reads DSGGF. Residues 245 to 251 form an RNA binding region; the sequence is GVGKPED. The Nucleophile role is filled by Asp264. Residues 269–273 form an RNA binding; important for wobble base 34 recognition region; sequence TRNAR. Zn(2+) contacts are provided by Cys302, Cys304, Cys307, and His333.

The protein belongs to the queuine tRNA-ribosyltransferase family. In terms of assembly, homodimer. Within each dimer, one monomer is responsible for RNA recognition and catalysis, while the other monomer binds to the replacement base PreQ1. Requires Zn(2+) as cofactor.

It catalyses the reaction 7-aminomethyl-7-carbaguanine + guanosine(34) in tRNA = 7-aminomethyl-7-carbaguanosine(34) in tRNA + guanine. The protein operates within tRNA modification; tRNA-queuosine biosynthesis. Catalyzes the base-exchange of a guanine (G) residue with the queuine precursor 7-aminomethyl-7-deazaguanine (PreQ1) at position 34 (anticodon wobble position) in tRNAs with GU(N) anticodons (tRNA-Asp, -Asn, -His and -Tyr). Catalysis occurs through a double-displacement mechanism. The nucleophile active site attacks the C1' of nucleotide 34 to detach the guanine base from the RNA, forming a covalent enzyme-RNA intermediate. The proton acceptor active site deprotonates the incoming PreQ1, allowing a nucleophilic attack on the C1' of the ribose to form the product. After dissociation, two additional enzymatic reactions on the tRNA convert PreQ1 to queuine (Q), resulting in the hypermodified nucleoside queuosine (7-(((4,5-cis-dihydroxy-2-cyclopenten-1-yl)amino)methyl)-7-deazaguanosine). This Salmonella choleraesuis (strain SC-B67) protein is Queuine tRNA-ribosyltransferase.